We begin with the raw amino-acid sequence, 886 residues long: MIHTDIAEILCVKPKTTKKTKTMEEDVKKTTTMKIEGEVVVMKKNLLDFKDVMASLLDRVNELLGRRVSLHLISSHQPDPANEKRGRLGKAAHLEKWVTKIKTSVTAEETAFGVTFDWDESMGPPAAFVIKNHHHSQFYLKSLTLRGFPDGEGGATAIHFICNSWIYPNHRYRSDRVFFSNKAYLPSETPELIKELREEELKNLRGNEKGGEFKEWDRVYDYAYYNDLGAPDKGPDSVRPVLGGSPELPYPRRGKTGRKSTKSDPKSESRLALLNLNIYVPRDERFSHVKFSDFLAYALKSVTQVLVPEIASVCDKTINEFDSFEDVFHLYDGSIKLANGHTISKLRDVIPWEMFRELVRNDGERFLKYPLPDILKESRSAWRTDEEFAREMLAGLNPVVISRLQEFPPKSCLDSAKYGNQHSSIRTEHIESNMNGLNVQEALEQNKLYILDHHDALMPYLTRINSTNTKTYATRTLLLLQADGTLKPLAIELSLPHAQGESYGSVSKVFTPAEKGVEGSVWQLAKAYAAVNDSGYHQLISHWLQTHAVIEPFIIASNRQLSVVHPIHKLLHPHFRDTMNINALARHVLINSDGVLERTVFPSRYAMEMSSSIYKNWVFTEQALPKDLLKRGVAVEDPNSDNGVKLLIEDYPFAVDGLEIWSAIKTWVTEYCTFYYNNDKTVQTDTEIQSWWTELRTKGHGDKRHESWWPSMQTRDDLIETCTIIIWIASALHAAVNFGQYPYAGFLPNRPTVSRRFMPEPGTDEYAELEEDADVAFLKTITPQLQTLLGISIIEILSMHSTDEIYLGQRDSPNWTADDEPLEAFKRFGKELELIENNIIRRNNDKRFKNRTGPVNIPYTLLYPNTTDYTREGGITGKGIPNSVSI.

A PLAT domain is found at 35-180; it reads IEGEVVVMKK…RYRSDRVFFS (146 aa). Residues 183 to 886 form the Lipoxygenase domain; that stretch reads AYLPSETPEL…GKGIPNSVSI (704 aa). The segment at 234-266 is disordered; that stretch reads GPDSVRPVLGGSPELPYPRRGKTGRKSTKSDPK. His-542, His-547, His-733, Asn-737, and Ile-886 together coordinate Fe cation.

Belongs to the lipoxygenase family. Fe cation serves as cofactor. As to expression, expressed in roots.

The catalysed reaction is (9Z,12Z)-octadecadienoate + O2 = (9S)-hydroperoxy-(10E,12Z)-octadecadienoate. The enzyme catalyses (9Z,12Z,15Z)-octadecatrienoate + O2 = (9S)-hydroperoxy-(10E,12Z,15Z)-octadecatrienoate. It participates in lipid metabolism; oxylipin biosynthesis. In terms of biological role, 9S-lipoxygenase that can use linoleic acid or linolenic acid as substrates. Plant lipoxygenases may be involved in a number of diverse aspects of plant physiology including growth and development, pest resistance, and senescence or responses to wounding. Catalyzes the hydroperoxidation of lipids containing a cis,cis-1,4-pentadiene structure. Function as regulators of root development by controlling the emergence of lateral roots. 9S-lypoxygenase-derived oxylipins may play an antagonistic role to ethylene signaling in the control of responses involving oxidative stress, lipid peroxidation and plant defense. LOX5-derived oxylipins may facilitate performance of green peach aphid (Myzus persicae) on foliage. 9S-lypoxygenase-derived oxylipins are engaged during infection to control the balance between salicylic acid (SA) and jasmonate (JA) signaling to facilitate infection by the fungal pathogen Fusarium graminearum. 9S-lypoxygenase-derived oxylipins activate brassinosteroid signaling to promote cell wall-based defense and limit pathogen infection. Does not seem to contribute to the oxidation of free fatty acids during seed aging. The polypeptide is Linoleate 9S-lipoxygenase 5 (Arabidopsis thaliana (Mouse-ear cress)).